A 97-amino-acid polypeptide reads, in one-letter code: Co-chaperonin GroES (97 aa).

It belongs to the GroES chaperonin family. As to quaternary structure, heptamer of 7 subunits arranged in a ring. Interacts with the chaperonin GroEL.

It is found in the cytoplasm. Its function is as follows. Together with the chaperonin GroEL, plays an essential role in assisting protein folding. The GroEL-GroES system forms a nano-cage that allows encapsulation of the non-native substrate proteins and provides a physical environment optimized to promote and accelerate protein folding. GroES binds to the apical surface of the GroEL ring, thereby capping the opening of the GroEL channel. The chain is Co-chaperonin GroES from Pseudarthrobacter chlorophenolicus (strain ATCC 700700 / DSM 12829 / CIP 107037 / JCM 12360 / KCTC 9906 / NCIMB 13794 / A6) (Arthrobacter chlorophenolicus).